Here is a 146-residue protein sequence, read N- to C-terminus: Hemoglobin subunit beta (146 aa).

V1 bears the N-acetylvaline mark. A Globin domain is found at 2–146 (HLTDAEKAAV…VATALAHKYH (145 aa)). Residue S44 is modified to Phosphoserine. K59 is modified (N6-acetyllysine). H63 is a binding site for heme b. The residue at position 82 (K82) is an N6-acetyllysine. H92 contributes to the heme b binding site. C93 is modified (S-nitrosocysteine). K144 is modified (N6-acetyllysine).

It belongs to the globin family. Heterotetramer of two alpha chains and two beta chains. In terms of tissue distribution, red blood cells.

Its function is as follows. Involved in oxygen transport from the lung to the various peripheral tissues. The sequence is that of Hemoglobin subunit beta (HBB) from Spalax ehrenbergi (Middle East blind mole rat).